Reading from the N-terminus, the 344-residue chain is Nuclear distribution protein nudE homolog 1 (344 aa).

The tract at residues 1–93 (MEDSGKTFGS…MQHSEGYRQI (93 aa)) is self-association. Residues 18–188 (WRDLAMTYKQ…ELAVQQKQDK (171 aa)) adopt a coiled-coil conformation. Over residues 30-47 (ENTQEELREFQEGSREYE) the composition is skewed to basic and acidic residues. Residues 30 to 65 (ENTQEELREFQEGSREYEAELETQLQQAETRNRDLL) are disordered. Positions 88–156 (EGYRQISALE…ERNAFLESEL (69 aa)) are interaction with PAFAH1B1. The interval 167–290 (QRLKDEARDL…QSPSRKSGPA (124 aa)) is interaction with CENPF. Residues 181 to 243 (AVQQKQDKPR…CGLGSPSSGT (63 aa)) are disordered. Positions 208 to 230 (ATGSAPSTPITHQGSSSGLNTPE) are enriched in polar residues. Residue serine 211 is modified to Phosphoserine. Threonine 215, threonine 228, threonine 243, and threonine 246 each carry phosphothreonine. Cysteine 274 is lipidated: S-palmitoyl cysteine; by ZDHHC2, ZDHHC3 and ZDHHC7. The disordered stretch occupies residues 279–337 (YDQSPSRKSGPALGRGTKNRDGIDRRPGSTAVGDKGSGKRLEFAKPSSQLSSPALPSTQ). A Phosphoserine modification is found at serine 282. Residues 296-305 (KNRDGIDRRP) show a composition bias toward basic and acidic residues. Over residues 324-335 (PSSQLSSPALPS) the composition is skewed to low complexity.

This sequence belongs to the nudE family. As to quaternary structure, homodimer. Interacts with CNTRL, LIS1, dynein, SLMAP and TCP1. Interacts with CENPF, dynactin, tubulin gamma, PAFAH1B1, PCM1 and PCNT. Interacts with ZNF365. Interacts with GTP-bound RAB9A and RAB9B; the interaction leads to RAB9-dynein motor tethering. Interacts (via C-terminus) with MCRS1 (via C-terminus); phosphorylation of NDE1 inhibits the interaction. Phosphorylated in mitosis. Phosphorylation at Thr-246 is essential for the G2/M transition. In terms of tissue distribution, expressed in brain, heart, kidney, liver, lung, skeletal muscle, spleen and testis.

The protein localises to the cytoplasm. It is found in the cytoskeleton. It localises to the microtubule organizing center. Its subcellular location is the centrosome. The protein resides in the spindle. The protein localises to the chromosome. It is found in the centromere. It localises to the kinetochore. Its subcellular location is the cleavage furrow. The protein resides in the cytoplasmic vesicle membrane. In terms of biological role, required for centrosome duplication and formation and function of the mitotic spindle. Essential for the development of the cerebral cortex. May regulate the production of neurons by controlling the orientation of the mitotic spindle during division of cortical neuronal progenitors of the proliferative ventricular zone of the brain. Orientation of the division plane perpendicular to the layers of the cortex gives rise to two proliferative neuronal progenitors whereas parallel orientation of the division plane yields one proliferative neuronal progenitor and a postmitotic neuron. A premature shift towards a neuronal fate within the progenitor population may result in an overall reduction in the final number of neurons and an increase in the number of neurons in the deeper layers of the cortex. Acts as a RAB9A/B effector that tethers RAB9-associated late endosomes to the dynein motor for their retrograde transport to the trans-Golgi network. This Rattus norvegicus (Rat) protein is Nuclear distribution protein nudE homolog 1.